Consider the following 1133-residue polypeptide: Probable cation-transporting ATPase 9 (1133 aa).

At 1 to 6 (MRVSSI) the chain is on the cytoplasmic side. A helical membrane pass occupies residues 7-28 (EAEMENPIDVDKTDVEGELKIK). Residues 29–34 (QVTLLR) lie on the Extracellular side of the membrane. A helical membrane pass occupies residues 35 to 53 (ENIVKKIVFFLVAIFCSDR). The Cytoplasmic segment spans residues 54–167 (PSVLKKVFYE…IEINVPSFLT (114 aa)). Residues 168-190 (LMWREFKKPINFLLYFGIIVWGI) traverse the membrane as a helical segment. Residues 191 to 193 (EQM) are Extracellular-facing. The helical transmembrane segment at 194 to 212 (YVSTAITVVFTTTINSLIC) threads the bilayer. Residues 213–363 (IYIRGVMQKL…PFNKKFQQQA (151 aa)) are Cytoplasmic-facing. Residues 364–383 (VKLTILMATLLLIGFLSTLS) traverse the membrane as a helical segment. Residues 384–396 (RLLDIELPPLFIA) lie on the Extracellular side of the membrane. Residues 397-418 (FRFLDILIYSAPPGMPMLIAIT) form a helical membrane-spanning segment. Topologically, residues 419 to 887 (NFVGLKRLKN…NSVEIFKGYL (469 aa)) are cytoplasmic. The 4-aspartylphosphate intermediate role is filled by D451. Positions 827 and 831 each coordinate Mg(2+). The chain crosses the membrane as a helical span at residues 888–906 (QVALLRYLGFLTLAYFYSS). Residues 907–915 (YSSGQMDWQ) are Extracellular-facing. The chain crosses the membrane as a helical span at residues 916 to 931 (ALASGYFLVYLILGCN). Over 932–948 (TPLKKLEKSVFDDNLFS) the chain is Cytoplasmic. Residues 949–972 (IYNVTSVLFGFTLHILSIVGCVES) traverse the membrane as a helical segment. The Extracellular portion of the chain corresponds to 973-994 (LHASPIYKEVNSLDAENNFQFE). The chain crosses the membrane as a helical span at residues 995 to 1018 (TQHNTVLNFNILINFFYVIISNHI). The Cytoplasmic portion of the chain corresponds to 1019–1030 (GKPMKDRYYKNT). The helical transmembrane segment at 1031-1050 (IAIYYDLGLIYTCKCMILQV) threads the bilayer. Residues 1051–1101 (LLILEHTHHGLIFLILLLDQEFSSSLTVQVYFSLPMNLFLPEEFSLNFTQE) lie on the Extracellular side of the membrane. Residues 1102–1124 (VKKEKELLICNSSSTILEVDYNL) traverse the membrane as a helical segment. The Cytoplasmic portion of the chain corresponds to 1125-1133 (RLNYFQQNF).

This sequence belongs to the cation transport ATPase (P-type) (TC 3.A.3) family. Type V subfamily.

Its subcellular location is the membrane. The catalysed reaction is ATP + H2O = ADP + phosphate + H(+). The protein is Probable cation-transporting ATPase 9 (TPA9) of Tetrahymena thermophila.